The chain runs to 443 residues: Ribosomal protein uS12 methylthiotransferase RimO (443 aa).

The MTTase N-terminal domain maps to 5–116 (PSVAVAHLGC…IVDVIQRAEA (112 aa)). Residues Cys-14, Cys-50, Cys-79, Cys-154, Cys-158, and Cys-161 each coordinate [4Fe-4S] cluster. Positions 140 to 370 (TTTEGTAYVR…ALQQPISWQQ (231 aa)) constitute a Radical SAM core domain. The region spanning 372-442 (QQEVGKTVQV…AYDLQGQLVS (71 aa)) is the TRAM domain.

It belongs to the methylthiotransferase family. RimO subfamily. It depends on [4Fe-4S] cluster as a cofactor.

It is found in the cytoplasm. The catalysed reaction is L-aspartate(89)-[ribosomal protein uS12]-hydrogen + (sulfur carrier)-SH + AH2 + 2 S-adenosyl-L-methionine = 3-methylsulfanyl-L-aspartate(89)-[ribosomal protein uS12]-hydrogen + (sulfur carrier)-H + 5'-deoxyadenosine + L-methionine + A + S-adenosyl-L-homocysteine + 2 H(+). Catalyzes the methylthiolation of an aspartic acid residue of ribosomal protein uS12. This chain is Ribosomal protein uS12 methylthiotransferase RimO, found in Acaryochloris marina (strain MBIC 11017).